The primary structure comprises 207 residues: Guanylate kinase (207 aa).

Residues 7–185 (GIVLVLCAPS…AYDELRAAYI (179 aa)) form the Guanylate kinase-like domain. 14-21 (APSGTGKT) is an ATP binding site.

The protein belongs to the guanylate kinase family.

It localises to the cytoplasm. The catalysed reaction is GMP + ATP = GDP + ADP. Its function is as follows. Essential for recycling GMP and indirectly, cGMP. The polypeptide is Guanylate kinase (Nitratidesulfovibrio vulgaris (strain ATCC 29579 / DSM 644 / CCUG 34227 / NCIMB 8303 / VKM B-1760 / Hildenborough) (Desulfovibrio vulgaris)).